Here is a 485-residue protein sequence, read N- to C-terminus: Pyruvate kinase (485 aa).

R33 contributes to the substrate binding site. Positions 35, 37, 67, and 68 each coordinate K(+). 35–38 is a binding site for ATP; the sequence is NFSH. ATP contacts are provided by R74 and K155. E221 contacts Mg(2+). Substrate contacts are provided by G244, D245, and T277. A Mg(2+)-binding site is contributed by D245.

This sequence belongs to the pyruvate kinase family. In terms of assembly, homotetramer. It depends on Mg(2+) as a cofactor. K(+) serves as cofactor.

It catalyses the reaction pyruvate + ATP = phosphoenolpyruvate + ADP + H(+). Its pathway is carbohydrate degradation; glycolysis; pyruvate from D-glyceraldehyde 3-phosphate: step 5/5. In Chlamydia trachomatis serovar L2 (strain ATCC VR-902B / DSM 19102 / 434/Bu), this protein is Pyruvate kinase (pyk).